We begin with the raw amino-acid sequence, 594 residues long: UvrABC system protein C (594 aa).

The GIY-YIG domain occupies 14–91 (DQPGCYLMKD…IKKYDPKYNI (78 aa)). Positions 196 to 231 (KEVRSELEIKMYEASEKLEFERAKELRDQIAHIDAI) constitute a UVR domain.

Belongs to the UvrC family. Interacts with UvrB in an incision complex.

It is found in the cytoplasm. In terms of biological role, the UvrABC repair system catalyzes the recognition and processing of DNA lesions. UvrC both incises the 5' and 3' sides of the lesion. The N-terminal half is responsible for the 3' incision and the C-terminal half is responsible for the 5' incision. The chain is UvrABC system protein C from Bacillus cereus (strain B4264).